The sequence spans 98 residues: Integration host factor subunit alpha (98 aa).

The interval 51–71 (NFDLRDKNERPGRNPKTGEDI) is disordered. Residues 53–69 (DLRDKNERPGRNPKTGE) show a composition bias toward basic and acidic residues.

It belongs to the bacterial histone-like protein family. In terms of assembly, heterodimer of an alpha and a beta chain.

Functionally, this protein is one of the two subunits of integration host factor, a specific DNA-binding protein that functions in genetic recombination as well as in transcriptional and translational control. This is Integration host factor subunit alpha from Vibrio campbellii (strain ATCC BAA-1116).